A 345-amino-acid chain; its full sequence is Sulfate/thiosulfate import ATP-binding protein CysA (345 aa).

The region spanning 3-237 is the ABC transporter domain; that stretch reads IQVSGLCKHF…PRTEFVYQFV (235 aa). 35-42 contributes to the ATP binding site; that stretch reads GPSGCGKT.

The protein belongs to the ABC transporter superfamily. Sulfate/tungstate importer (TC 3.A.1.6) family. The complex is composed of two ATP-binding proteins (CysA), two transmembrane proteins (CysT and CysW) and a solute-binding protein (CysP).

It localises to the cell inner membrane. It catalyses the reaction sulfate(out) + ATP + H2O = sulfate(in) + ADP + phosphate + H(+). The catalysed reaction is thiosulfate(out) + ATP + H2O = thiosulfate(in) + ADP + phosphate + H(+). Part of the ABC transporter complex CysAWTP involved in sulfate/thiosulfate import. Responsible for energy coupling to the transport system. The chain is Sulfate/thiosulfate import ATP-binding protein CysA from Vibrio vulnificus (strain CMCP6).